A 66-amino-acid polypeptide reads, in one-letter code: Dermaseptin PD-3-7 (66 aa).

Positions 1–22 are cleaved as a signal peptide; it reads MSFMKKSLLLVLFLGVVSLSNC. Positions 23–40 are excised as a propeptide; that stretch reads EEEKGENENEDHEEHHEE.

Expressed by the skin glands.

It localises to the secreted. Its function is as follows. Possesses a potent antimicrobial activity against Gram-positive and Gram-negative bacteria. Probably acts by disturbing membrane functions with its amphipathic structure. This is Dermaseptin PD-3-7 from Agalychnis dacnicolor (Giant Mexican leaf frog).